The following is a 588-amino-acid chain: Oxidoreductase NdmD (588 aa).

The 106-residue stretch at 9 to 114 (WFPIATTEDL…VREKHGFIWT (106 aa)) folds into the Rieske domain. [2Fe-2S] cluster is bound by residues C50, H52, C69, and H72. The region spanning 272–373 (PTHYICEVVT…TLPRNGFPLV (102 aa)) is the FAD-binding FR-type domain. The 86-residue stretch at 503 to 588 (YEVELKKTGQ…CKSKKIVLDL (86 aa)) folds into the 2Fe-2S ferredoxin-type domain. [2Fe-2S] cluster-binding residues include C537, C542, C545, and C575.

The cofactor is [2Fe-2S] cluster.

In terms of biological role, involved in the caffeine degradation, which is the essential first step for assimilating the carbon and nitrogen in caffeine. Catalyzes the oxidation of NADH and transfers electrons to NdmA and NdmB, which catalyze the N-demethylation reactions. The polypeptide is Oxidoreductase NdmD (ndmD) (Pseudomonas putida (Arthrobacter siderocapsulatus)).